Here is a 150-residue protein sequence, read N- to C-terminus: D-aminoacyl-tRNA deacylase (150 aa).

Positions 138-139 (GP) match the Gly-cisPro motif, important for rejection of L-amino acids motif.

The protein belongs to the DTD family. As to quaternary structure, homodimer.

It localises to the cytoplasm. The enzyme catalyses glycyl-tRNA(Ala) + H2O = tRNA(Ala) + glycine + H(+). It catalyses the reaction a D-aminoacyl-tRNA + H2O = a tRNA + a D-alpha-amino acid + H(+). Functionally, an aminoacyl-tRNA editing enzyme that deacylates mischarged D-aminoacyl-tRNAs. Also deacylates mischarged glycyl-tRNA(Ala), protecting cells against glycine mischarging by AlaRS. Acts via tRNA-based rather than protein-based catalysis; rejects L-amino acids rather than detecting D-amino acids in the active site. By recycling D-aminoacyl-tRNA to D-amino acids and free tRNA molecules, this enzyme counteracts the toxicity associated with the formation of D-aminoacyl-tRNA entities in vivo and helps enforce protein L-homochirality. This Sorangium cellulosum (strain So ce56) (Polyangium cellulosum (strain So ce56)) protein is D-aminoacyl-tRNA deacylase.